The chain runs to 236 residues: Putative lipoprotein MlpA (236 aa).

The N-terminal stretch at Met-1–Gly-21 is a signal peptide. Cys-22 carries the N-palmitoyl cysteine lipid modification. The S-diacylglycerol cysteine moiety is linked to residue Cys-22.

The protein resides in the cell membrane. This chain is Putative lipoprotein MlpA (mlpA), found in Myxococcus xanthus.